A 485-amino-acid chain; its full sequence is Probable glycine dehydrogenase (decarboxylating) subunit 2 (485 aa).

N6-(pyridoxal phosphate)lysine is present on Lys-273.

Belongs to the GcvP family. C-terminal subunit subfamily. The glycine cleavage system is composed of four proteins: P, T, L and H. In this organism, the P 'protein' is a heterodimer of two subunits. It depends on pyridoxal 5'-phosphate as a cofactor.

It catalyses the reaction N(6)-[(R)-lipoyl]-L-lysyl-[glycine-cleavage complex H protein] + glycine + H(+) = N(6)-[(R)-S(8)-aminomethyldihydrolipoyl]-L-lysyl-[glycine-cleavage complex H protein] + CO2. In terms of biological role, the glycine cleavage system catalyzes the degradation of glycine. The P protein binds the alpha-amino group of glycine through its pyridoxal phosphate cofactor; CO(2) is released and the remaining methylamine moiety is then transferred to the lipoamide cofactor of the H protein. This Bacillus licheniformis (strain ATCC 14580 / DSM 13 / JCM 2505 / CCUG 7422 / NBRC 12200 / NCIMB 9375 / NCTC 10341 / NRRL NRS-1264 / Gibson 46) protein is Probable glycine dehydrogenase (decarboxylating) subunit 2.